The primary structure comprises 220 residues: Octanoyltransferase (220 aa).

One can recognise a BPL/LPL catalytic domain in the interval 31 to 206; it reads DDTPDEVWLV…ELVTLLDYEQ (176 aa). Residues 70 to 77, 137 to 139, and 150 to 152 contribute to the substrate site; these read RGGQVTYH, SLG, and GLA. Cys-168 (acyl-thioester intermediate) is an active-site residue.

Belongs to the LipB family.

The protein resides in the cytoplasm. The catalysed reaction is octanoyl-[ACP] + L-lysyl-[protein] = N(6)-octanoyl-L-lysyl-[protein] + holo-[ACP] + H(+). It participates in protein modification; protein lipoylation via endogenous pathway; protein N(6)-(lipoyl)lysine from octanoyl-[acyl-carrier-protein]: step 1/2. Functionally, catalyzes the transfer of endogenously produced octanoic acid from octanoyl-acyl-carrier-protein onto the lipoyl domains of lipoate-dependent enzymes. Lipoyl-ACP can also act as a substrate although octanoyl-ACP is likely to be the physiological substrate. This chain is Octanoyltransferase, found in Vibrio campbellii (strain ATCC BAA-1116).